A 104-amino-acid chain; its full sequence is Large ribosomal subunit protein uL24 (104 aa).

It belongs to the universal ribosomal protein uL24 family. As to quaternary structure, part of the 50S ribosomal subunit.

One of two assembly initiator proteins, it binds directly to the 5'-end of the 23S rRNA, where it nucleates assembly of the 50S subunit. Functionally, one of the proteins that surrounds the polypeptide exit tunnel on the outside of the subunit. The protein is Large ribosomal subunit protein uL24 of Klebsiella pneumoniae (strain 342).